Consider the following 62-residue polypeptide: MKIHLFFFILLFWVTILPARSNFDPKYRFERCAKVKGICKTFCDDDEYDYGYCIKWRNQCCI.

An N-terminal signal peptide occupies residues 1-21 (MKIHLFFFILLFWVTILPARS). Cystine bridges form between Cys-32/Cys-60, Cys-39/Cys-53, and Cys-43/Cys-61.

The protein belongs to the beta-defensin family.

The protein localises to the secreted. Functionally, has antibacterial activity. This chain is Beta-defensin 110 (DEFB110), found in Canis lupus familiaris (Dog).